We begin with the raw amino-acid sequence, 256 residues long: Na(+)-translocating NADH-quinone reductase subunit C (256 aa).

A helical membrane pass occupies residues 12–32 (LGVVIGLSLVCSIIVSTAAVG). The residue at position 224 (Thr-224) is an FMN phosphoryl threonine.

This sequence belongs to the NqrC family. Composed of six subunits; NqrA, NqrB, NqrC, NqrD, NqrE and NqrF. It depends on FMN as a cofactor.

The protein localises to the cell inner membrane. It catalyses the reaction a ubiquinone + n Na(+)(in) + NADH + H(+) = a ubiquinol + n Na(+)(out) + NAD(+). Its activity is regulated as follows. This reaction is tightly coupled to the Na(+) pumping activity and specifically requires Na(+) for activity. Inhibited by korormicin and 2-N-heptyl-4-hydroxyquinoline N-oxide (HQNO). Its function is as follows. NQR complex catalyzes the reduction of ubiquinone-1 to ubiquinol by two successive reactions, coupled with the transport of Na(+) ions from the cytoplasm to the periplasm. NqrA to NqrE are probably involved in the second step, the conversion of ubisemiquinone to ubiquinol. This Vibrio alginolyticus protein is Na(+)-translocating NADH-quinone reductase subunit C.